The primary structure comprises 206 residues: Urease accessory protein UreG (206 aa).

14 to 21 (GPVGSGKT) provides a ligand contact to GTP.

Belongs to the SIMIBI class G3E GTPase family. UreG subfamily. In terms of assembly, homodimer. UreD, UreF and UreG form a complex that acts as a GTP-hydrolysis-dependent molecular chaperone, activating the urease apoprotein by helping to assemble the nickel containing metallocenter of UreC. The UreE protein probably delivers the nickel.

Its subcellular location is the cytoplasm. In terms of biological role, facilitates the functional incorporation of the urease nickel metallocenter. This process requires GTP hydrolysis, probably effectuated by UreG. This chain is Urease accessory protein UreG, found in Methylocella silvestris (strain DSM 15510 / CIP 108128 / LMG 27833 / NCIMB 13906 / BL2).